The following is a 291-amino-acid chain: tRNA dimethylallyltransferase (291 aa).

Residue 9 to 16 (GTTASGKS) participates in ATP binding. Substrate is bound at residue 11–16 (TASGKS). An interaction with substrate tRNA region spans residues 34–37 (DSLA).

It belongs to the IPP transferase family. In terms of assembly, monomer. Requires Mg(2+) as cofactor.

The catalysed reaction is adenosine(37) in tRNA + dimethylallyl diphosphate = N(6)-dimethylallyladenosine(37) in tRNA + diphosphate. In terms of biological role, catalyzes the transfer of a dimethylallyl group onto the adenine at position 37 in tRNAs that read codons beginning with uridine, leading to the formation of N6-(dimethylallyl)adenosine (i(6)A). The polypeptide is tRNA dimethylallyltransferase (Campylobacter concisus (strain 13826)).